A 385-amino-acid polypeptide reads, in one-letter code: Mitochondrial fission regulator 2 (385 aa).

Position 2 is an N-acetylserine (Ser2). Ser119 carries the post-translational modification Phosphoserine. A disordered region spans residues 195 to 268 (SVDPDQLPGS…SHHSKSQRNK (74 aa)). The segment covering 207–216 (SPPPPPPLPP) has biased composition (pro residues). Over residues 231–257 (PGSNNICDSDNPATEMSKQNPAANKTN) the composition is skewed to polar residues. Phosphoserine is present on residues Ser291 and Ser328. Positions 331–363 (KENRSWESSPFSSPETSRFGHHISQSEGQRTKE) are disordered. The segment covering 336 to 346 (WESSPFSSPET) has biased composition (polar residues).

This sequence belongs to the MTFR1 family.

It localises to the mitochondrion. In terms of biological role, may play a role in mitochondrial aerobic respiration essentially in the testis. Can also promote mitochondrial fission. The chain is Mitochondrial fission regulator 2 (MTFR2) from Homo sapiens (Human).